We begin with the raw amino-acid sequence, 299 residues long: MTLYDVPAPAKLNLFLHVVGRRADGYHLLQTAFRFIDLADTLHFEARADGAIGRAYELPGVAESDDLVVRAARSLQRATGTRQGAQIGLHKRIPQGGGLGGGSSDAATTLIALNRLWGTGLSRSQLMQLALPLGADVPVFVFGQSAFAQGVGEDLTAVALPPAAYLVVQPDAGVPTAAIFSDPDLTRDCASVTIADFLALPTFCFGRNDLEPVVLRRYPEVSGAVRWLFEHGLRVRMSGSGACLFAEFPTLPEAVLAQEEITATMRVAGKTTSHTHPGFRLVQASTGLTEHPLRNWIAS.

Lys11 is a catalytic residue. 94–104 (PQGGGLGGGSS) provides a ligand contact to ATP. Asp136 is an active-site residue.

It belongs to the GHMP kinase family. IspE subfamily.

The catalysed reaction is 4-CDP-2-C-methyl-D-erythritol + ATP = 4-CDP-2-C-methyl-D-erythritol 2-phosphate + ADP + H(+). The protein operates within isoprenoid biosynthesis; isopentenyl diphosphate biosynthesis via DXP pathway; isopentenyl diphosphate from 1-deoxy-D-xylulose 5-phosphate: step 3/6. Functionally, catalyzes the phosphorylation of the position 2 hydroxy group of 4-diphosphocytidyl-2C-methyl-D-erythritol. The protein is 4-diphosphocytidyl-2-C-methyl-D-erythritol kinase of Bordetella bronchiseptica (strain ATCC BAA-588 / NCTC 13252 / RB50) (Alcaligenes bronchisepticus).